The sequence spans 742 residues: Synaptic vesicle glycoprotein 2A (742 aa).

The interaction with SYT1 stretch occupies residues 1 to 57 (MEEGFRDRAAFIRGAKDIAKEVKKHAAKKVVKGLDRVQDEYSRRSYSRFEEEDDDDD). Topologically, residues 1-169 (MEEGFRDRAA…GHGRFQWTLY (169 aa)) are cytoplasmic. Residues 33-49 (GLDRVQDEYSRRSYSRF) are compositionally biased toward basic and acidic residues. The disordered stretch occupies residues 33-144 (GLDRVQDEYS…GRGEAQRRKE (112 aa)). Residues serine 80 and serine 81 each carry the phosphoserine modification. Threonine 84 bears the Phosphothreonine mark. Over residues 122-137 (VRGGLSDGEGPPGGRG) the composition is skewed to gly residues. A Phosphoserine modification is found at serine 127. Residues 170 to 190 (FVLGLALMADGVEVFVVGFVL) traverse the membrane as a helical segment. At 191 to 205 (PSAEKDMCLSDSNKG) the chain is on the extracellular side. The helical transmembrane segment at 206 to 226 (MLGLIVYLGMMVGAFLWGGLA) threads the bilayer. Residues 227 to 233 (DRLGRRQ) are Cytoplasmic-facing. Residues 234 to 254 (CLLISLSVNSVFAFFSSFVQG) traverse the membrane as a helical segment. The Extracellular segment spans residues 255–262 (YGTFLFCR). A helical transmembrane segment spans residues 263 to 283 (LLSGVGIGGSIPIVFSYFSEF). Topologically, residues 284–294 (LAQEKRGEHLS) are cytoplasmic. Residues 295–315 (WLCMFWMIGGVYAAAMAWAII) form a helical membrane-spanning segment. Residues 316–334 (PHYGWSFQMGSAYQFHSWR) lie on the Extracellular side of the membrane. Residues 335–355 (VFVLVCAFPSVFAIGALTTQP) form a helical membrane-spanning segment. Topologically, residues 356-447 (ESPRFFLENG…CFGPEYRRIT (92 aa)) are cytoplasmic. Residue serine 393 is modified to Phosphoserine. The helical transmembrane segment at 448 to 468 (LMMMGVWFTMSFSYYGLTVWF) threads the bilayer. Residues 469–598 (PDMIRHLQAV…GTGEGAYMVY (130 aa)) are Extracellular-facing. Tyrosine 480 carries the post-translational modification Phosphotyrosine. Residues asparagine 498, asparagine 548, and asparagine 573 are each glycosylated (N-linked (GlcNAc...) asparagine). The helical transmembrane segment at 599 to 619 (FVSFLGTLAVLPGNIVSALLM) threads the bilayer. At 620–626 (DKIGRLR) the chain is on the cytoplasmic side. The helical transmembrane segment at 627–647 (MLAGSSVMSCVSCFFLSFGNS) threads the bilayer. Residues 648–651 (ESAM) are Extracellular-facing. The helical transmembrane segment at 652-672 (IALLCLFGGVSIASWNALDVL) threads the bilayer. Over 673–685 (TVELYPSDKRTTA) the chain is Cytoplasmic. Residues 686–708 (FGFLNALCKLAAVLGISIFTSFV) form a helical membrane-spanning segment. The Extracellular segment spans residues 709–712 (GITK). A helical transmembrane segment spans residues 713–731 (AAPILFASAALALGSSLAL). The Cytoplasmic portion of the chain corresponds to 732–742 (KLPETRGQVLQ).

The protein belongs to the major facilitator superfamily. In terms of assembly, interacts with SYT1/synaptotagmin-1 in a calcium-dependent manner. Binds the adapter protein complex AP-2. As to quaternary structure, (Microbial infection) Interacts with C.botulinum neurotoxin type A2 (BoNT/A, botA). Interaction is improved by glycosylation of SV2. Post-translationally, phosphorylation by CK1 of the N-terminal cytoplasmic domain regulates interaction with SYT1. N-glycosylated.

The protein resides in the presynapse. It localises to the cytoplasmic vesicle. The protein localises to the secretory vesicle. It is found in the synaptic vesicle membrane. Plays a role in the control of regulated secretion in neural and endocrine cells, enhancing selectively low-frequency neurotransmission. Positively regulates vesicle fusion by maintaining the readily releasable pool of secretory vesicles. Its function is as follows. (Microbial infection) Receptor for the C.botulinum neurotoxin type A2 (BoNT/A, botA); glycosylation is not essential but enhances the interaction. Probably also serves as a receptor for the closely related C.botulinum neurotoxin type A1. The protein is Synaptic vesicle glycoprotein 2A (SV2A) of Homo sapiens (Human).